Reading from the N-terminus, the 179-residue chain is Stathmin-2 (179 aa).

Residues 1 to 26 (MAKTAMAYKEKMKELSMLSLICSCFY) form a membrane attachment region. Phosphoserine is present on residues serine 16, serine 50, serine 62, serine 73, serine 80, and serine 97. The SLD domain occupies 38-179 (DDMEVKQINK…NKELQVELSG (142 aa)). The segment at 39–96 (DMEVKQINKRASGQAFELILKPPSPVSEAPRTLASPKKKELSLEEIQKKLEAAEERRK) is regulatory/phosphorylation domain. The stretch at 74 to 179 (PKKKELSLEE…NKELQVELSG (106 aa)) forms a coiled coil.

It belongs to the stathmin family. In terms of tissue distribution, expression is neuron-specific and found in cerebellum, forebrain, midbrain, tectum and spinal cord.

It localises to the cytoplasm. The protein localises to the perinuclear region. Its subcellular location is the cell projection. It is found in the growth cone. The protein resides in the membrane. It localises to the axon. The protein localises to the lamellipodium. Its function is as follows. Is a key regulator of neurite extension through regulation of microtubule instabilily. The polypeptide is Stathmin-2 (STMN2) (Gallus gallus (Chicken)).